The chain runs to 330 residues: tRNA pseudouridine synthase B (330 aa).

D42 (nucleophile) is an active-site residue.

The protein belongs to the pseudouridine synthase TruB family. Type 1 subfamily.

The catalysed reaction is uridine(55) in tRNA = pseudouridine(55) in tRNA. Functionally, responsible for synthesis of pseudouridine from uracil-55 in the psi GC loop of transfer RNAs. The sequence is that of tRNA pseudouridine synthase B from Lactococcus lactis subsp. cremoris (strain SK11).